Reading from the N-terminus, the 561-residue chain is DNA ligase B (561 aa).

Lysine 125 acts as the N6-AMP-lysine intermediate in catalysis.

It belongs to the NAD-dependent DNA ligase family. LigB subfamily.

The catalysed reaction is NAD(+) + (deoxyribonucleotide)n-3'-hydroxyl + 5'-phospho-(deoxyribonucleotide)m = (deoxyribonucleotide)n+m + AMP + beta-nicotinamide D-nucleotide.. Catalyzes the formation of phosphodiester linkages between 5'-phosphoryl and 3'-hydroxyl groups in double-stranded DNA using NAD as a coenzyme and as the energy source for the reaction. In Salmonella gallinarum (strain 287/91 / NCTC 13346), this protein is DNA ligase B.